We begin with the raw amino-acid sequence, 160 residues long: Transcription elongation factor GreB (160 aa).

Belongs to the GreA/GreB family. GreB subfamily.

Necessary for efficient RNA polymerase transcription elongation past template-encoded arresting sites. The arresting sites in DNA have the property of trapping a certain fraction of elongating RNA polymerases that pass through, resulting in locked ternary complexes. Cleavage of the nascent transcript by cleavage factors such as GreA or GreB allows the resumption of elongation from the new 3'terminus. GreB releases sequences of up to 9 nucleotides in length. The protein is Transcription elongation factor GreB of Vibrio vulnificus (strain CMCP6).